The following is a 152-amino-acid chain: SXP/RAL-2 family protein Ani s 5 (152 aa).

A signal peptide spans 1-18; that stretch reads MKTLIVAALFCTIGMALA. Necessary for IgE-binding stretches follow at residues 25–42, 49–54, 58–66, and 103–120; these read PPFLAGAPQDVVKAFFEL, KTDPEI, LDAWVDTLG, and KKADAELSKIAEDDSLNG. 2 igG4-binding regions span residues 49–68 and 118–137; these read KTDPEIEKDLDAWVDTLGGD and LNGIQKAQKIQAIYKTLPQS. The segment at 127–146 is igE-binding and IgG4-binding; it reads IQAIYKTLPQSVKDELEKGI.

This sequence belongs to the SXP/RAL-2 family. Monomer. In terms of tissue distribution, excretory gland, ventriculus, and the luminal epithelium of the intestine of the larvae.

It is found in the secreted. The chain is SXP/RAL-2 family protein Ani s 5 from Anisakis simplex (Herring worm).